The sequence spans 427 residues: MNKLENTIDSDIAGPAPRHRTTQVKVGDVAVGGGAPIVVQSMTNTDTADIDGTIAQVAALARAGSEMVRITVDREEAAAAVPHIRDGLAKRGITTPLIGDFHYIGHKLLAAYPACAEALAKYRINPGNVGFKDKRDTQFADIIEIANKNSKPVRIGANWGSLDQELLTKLMDENAASANPRDVRAVTREAMVQSALLSAARAEELGMPKDRIILSAKVSAVQDLIAVYQDLASRSDYAIHLGLTEAGMGSKGIVASSAALGILLQQGIGDTIRISLTPEPGGDRTREVQVGQELLQTMGFRTFVPLVAACPGCGRTTSTTFQELARSIQDFIRDEMPAWKTKYPGVEELNVAVMGCIVNGPGESKHANIGISLPGTGEAPAAPVFVDGKKFRTLRGPTISDDFKALVIDYIDQRYGQGAKVPVTAAE.

The disordered stretch occupies residues 1 to 21; sequence MNKLENTIDSDIAGPAPRHRT. The [4Fe-4S] cluster site is built by Cys-310, Cys-313, Cys-356, and Glu-363.

The protein belongs to the IspG family. [4Fe-4S] cluster serves as cofactor.

It carries out the reaction (2E)-4-hydroxy-3-methylbut-2-enyl diphosphate + oxidized [flavodoxin] + H2O + 2 H(+) = 2-C-methyl-D-erythritol 2,4-cyclic diphosphate + reduced [flavodoxin]. It participates in isoprenoid biosynthesis; isopentenyl diphosphate biosynthesis via DXP pathway; isopentenyl diphosphate from 1-deoxy-D-xylulose 5-phosphate: step 5/6. In terms of biological role, converts 2C-methyl-D-erythritol 2,4-cyclodiphosphate (ME-2,4cPP) into 1-hydroxy-2-methyl-2-(E)-butenyl 4-diphosphate. This is 4-hydroxy-3-methylbut-2-en-1-yl diphosphate synthase (flavodoxin) from Bradyrhizobium diazoefficiens (strain JCM 10833 / BCRC 13528 / IAM 13628 / NBRC 14792 / USDA 110).